We begin with the raw amino-acid sequence, 242 residues long: Urease accessory protein UreF (242 aa).

This sequence belongs to the UreF family. In terms of assembly, ureD, UreF and UreG form a complex that acts as a GTP-hydrolysis-dependent molecular chaperone, activating the urease apoprotein by helping to assemble the nickel containing metallocenter of UreC. The UreE protein probably delivers the nickel.

It localises to the cytoplasm. Its function is as follows. Required for maturation of urease via the functional incorporation of the urease nickel metallocenter. This Bradyrhizobium diazoefficiens (strain JCM 10833 / BCRC 13528 / IAM 13628 / NBRC 14792 / USDA 110) protein is Urease accessory protein UreF.